Consider the following 472-residue polypeptide: Serine/threonine-protein kinase sax-1 (472 aa).

The Protein kinase domain maps to 87 to 381 (FESLKVIGRG…LDEIKQCPFF (295 aa)). ATP-binding positions include 93-101 (IGRGAFGEV) and lysine 116. Aspartate 210 acts as the Proton acceptor in catalysis. In terms of domain architecture, AGC-kinase C-terminal spans 382–452 (RRIDWNHIRE…KRFDGLTQKM (71 aa)).

Belongs to the protein kinase superfamily. AGC Ser/Thr protein kinase family. Mg(2+) is required as a cofactor.

The protein resides in the cytoplasm. The protein localises to the nucleus. It carries out the reaction L-seryl-[protein] + ATP = O-phospho-L-seryl-[protein] + ADP + H(+). The catalysed reaction is L-threonyl-[protein] + ATP = O-phospho-L-threonyl-[protein] + ADP + H(+). In terms of biological role, acts with sax-2 to restrict the growth of both primary and secondary neurites. Regulates mechanosensory tiling by controlling the termination point of sensory dendrites. This Caenorhabditis briggsae protein is Serine/threonine-protein kinase sax-1.